A 218-amino-acid chain; its full sequence is GTP cyclohydrolase 1 (218 aa).

The Zn(2+) site is built by cysteine 109, histidine 112, and cysteine 180.

It belongs to the GTP cyclohydrolase I family. Toroid-shaped homodecamer, composed of two pentamers of five dimers.

The enzyme catalyses GTP + H2O = 7,8-dihydroneopterin 3'-triphosphate + formate + H(+). Its pathway is cofactor biosynthesis; 7,8-dihydroneopterin triphosphate biosynthesis; 7,8-dihydroneopterin triphosphate from GTP: step 1/1. The protein is GTP cyclohydrolase 1 (folE) of Pasteurella multocida (strain Pm70).